The chain runs to 59 residues: UPF0291 protein CPR_1073 (59 aa).

The segment at 1–30 (MNIDELTKRINELHKKHKEEGLSEDEHKER) is disordered.

This sequence belongs to the UPF0291 family.

It is found in the cytoplasm. The chain is UPF0291 protein CPR_1073 from Clostridium perfringens (strain SM101 / Type A).